Reading from the N-terminus, the 321-residue chain is Glucokinase (321 aa).

8–13 (GDVGGT) provides a ligand contact to ATP.

It belongs to the bacterial glucokinase family.

It is found in the cytoplasm. It catalyses the reaction D-glucose + ATP = D-glucose 6-phosphate + ADP + H(+). This chain is Glucokinase, found in Cronobacter sakazakii (strain ATCC BAA-894) (Enterobacter sakazakii).